A 339-amino-acid chain; its full sequence is Pre-mRNA-splicing factor syf2 (339 aa).

A disordered region spans residues 1–136 (MPPEKKRKTE…LQSDPSQLTA (136 aa)). The segment covering 7-16 (RKTEPEDKAE) has biased composition (basic and acidic residues). Residues 17-37 (VTQQENDVAESTTEPNNQTVT) show a composition bias toward polar residues. The segment covering 45-93 (VTEAALATTSSSSPPVLSASETAQPDTAATSQSSSTPPTSTSAAESAAA) has biased composition (low complexity). Over residues 94 to 103 (KARERAERFR) the composition is skewed to basic and acidic residues. The span at 126–135 (RLQSDPSQLT) shows a compositional bias: polar residues.

This sequence belongs to the SYF2 family. In terms of assembly, associated with the spliceosome.

The protein resides in the nucleus. Functionally, involved in pre-mRNA splicing. The chain is Pre-mRNA-splicing factor syf2 (msp-4) from Neurospora crassa (strain ATCC 24698 / 74-OR23-1A / CBS 708.71 / DSM 1257 / FGSC 987).